Consider the following 377-residue polypeptide: Cytochrome b (377 aa).

4 consecutive transmembrane segments (helical) span residues 34–54 (FGFL…FLSM), 78–100 (WLLR…IHIA), 113–133 (TWMT…LGYV), and 179–199 (FFTL…IHLL). Residues His-84 and His-98 each coordinate heme b. Heme b is bound by residues His-183 and His-197. His-202 contributes to the a ubiquinone binding site. 4 consecutive transmembrane segments (helical) span residues 225-245 (FTIK…ILVL), 288-308 (KLGG…LPLY), 323-343 (MLFW…AQAI), and 352-372 (QILT…SVLW).

This sequence belongs to the cytochrome b family. As to quaternary structure, the main subunits of complex b-c1 are: cytochrome b, cytochrome c1 and the Rieske protein. Requires heme b as cofactor.

Its subcellular location is the mitochondrion inner membrane. Its function is as follows. Component of the ubiquinol-cytochrome c reductase complex (complex III or cytochrome b-c1 complex) that is part of the mitochondrial respiratory chain. The b-c1 complex mediates electron transfer from ubiquinol to cytochrome c. Contributes to the generation of a proton gradient across the mitochondrial membrane that is then used for ATP synthesis. In Priapulus caudatus (Priapulid worm), this protein is Cytochrome b (mt:Cyt-b).